Reading from the N-terminus, the 65-residue chain is Potassium channel toxin kappa-KTx 2.7 (65 aa).

The N-terminal stretch at 1–26 (MKTSGTVYVFLLLLAFGIFTDISSAC) is a signal peptide. Residues 27-39 (SEQMDDEDSYEVE) constitute a propeptide that is removed on maturation. Disulfide bonds link Cys45-Cys63 and Cys49-Cys59.

Belongs to the short scorpion toxin superfamily. Potassium channel inhibitor kappa-KTx family. Kappa-KTx 2 subfamily. As to expression, expressed by the venom gland.

It is found in the secreted. Functionally, weakly inhibits the Kv7.1/KCNQ1 channel (10 uM of the toxin inhibits currents by 17.8%). This Heterometrus petersii (Asian forest scorpion) protein is Potassium channel toxin kappa-KTx 2.7.